The primary structure comprises 101 residues: MSRRCELTAKGAQVGHKVSHSNIKTKRRFLPNLVNVTFLSDTLGRAVRLRVSTNALKSVDHRGGLDAYLLKAREAELSPKAVELKRAIAKKMAGEPVAAAS.

This sequence belongs to the bacterial ribosomal protein bL28 family.

The protein is Large ribosomal subunit protein bL28 of Rhodopseudomonas palustris (strain ATCC BAA-98 / CGA009).